The chain runs to 1456 residues: MVPTILLSALLLHFTDVVAAEPRYILWVSSVVQRFSSEKACLHLLNLNESVSLSVTLEYDGSSTTIFDQPVDEGNFYACADFKVSQMSSEQLAFVALLVQGNTLKISERRSVAIAAEENATFVQTDTPVHKPGDTVHFRVVTLNIWLKPVDDLYPLITVQDPQSNVIFQWINVTTFRNITQLSFQLTPEPILGDYTIVIKTQSGTTVMDHFTVNRDVLPKFEVELTAPETITIADSQFQMVTCAKYTYGQPVQGKAQIKVCRELFSPAHCESNENEICEQFTVQLKDGCASHIINTKVFQLDRSGLFMTLNVNEVVTESGTGVQMSKTHSVFITSVLGTVSFENMDPFYRRGITYFGTLKFSGPNNTPLVDKLLQLELDGKPVGNYTTDENGEARFSINTSEIFGAQISLKAVYVRPRSCHRSSWLSPEYLDAYFSASRFYSQTSSFTKIILEPKQLPCDQEKMFSVLYSLNPEAYKEASDVTFFYLVMVRGGISRSGQKQVRVQAWNGNFSFPISINADLAPSADLFVYTLHPSGEIVADNVRLQIEKCFKNKVSINFSRDKDLPGSNTSVHLQAAPDSFCALRAVDKSALLLNHGQEMTPESVYFTLPYIHQYGYFYNGLNLDDQQAEPCIPQKDLFYNGLYYTPTGNIWDGDLSNLLSNMGLKIFTNLHYRKPEVCSSQENQPLLRTFDHPNERIMMYGGGAPPSSAFHDSVDSISHAKVAIKETVRTNFPRTWIWNLVSVDSSGTANVSFLVPDTITQWEASAFCVNGNAGFGISPKVSLQISQPFFVEVTSPFSVVRSEQSDMVVTVFNYLTTCVEISVQLEASENYEASINTQRNTDSEVLQAGEQKTYVWTIIPKTLGKVNVTVVATSKQSRACPNDASKEQDVHWKDTVVKTMLVEAEGIEKEATQSFLICPKGTKASKQTLLELPSNVVEGSVRSFVTIVGDILGVAMQNLESLLQMPYGCGEQNIAQLASDVYILDYLKATDQLTEELKSKAQRLLSNGYQNHLSFKNYDGSYDVFCQSNQEGSTWLSALSFKTVEKMKEYIFIEETVPKQTLIWLVKKQKSNGCFRRDEKHVDTAQEGREGDQEDIALTAYVVGVFLEVGLNASFPALRNGLYCLEEAFSNGVTNGYTQAILAYVFALAGKEQQAKSLLSILDKSATKTNNMIYWERDEKPETDNSPSFIPSALSGETEKTCYVLLAVLSQDTQDLDYASKIVQWLAQRMNSHGGFSAMQDTTVCLLALTQYMKLTGSNPQNTITLSSEESEEVFYVNRNKRLLVQHSKVSKGHQQYTVDVEGDGCSFIQATLRYNVPLPKEASGFSLSVKTGKSNSSDEFQTKFELTVTLTYTGARESSVTVLVDVKMLSGFTPVVSSTEELKFNSQVTKTDIKNGHVLFYLENVPKEATSLTFSIEQTNHVANIQPAPVTVYSYEKGEYAFDSYNINSISDSQ.

The N-terminal stretch at 1–19 (MVPTILLSALLLHFTDVVA) is a signal peptide. 3 N-linked (GlcNAc...) asparagine glycosylation sites follow: asparagine 48, asparagine 172, and asparagine 868.

This sequence belongs to the protease inhibitor I39 (alpha-2-macroglobulin) family. Homotetramer; consists of two dimer pairs that are disulfide-linked. Part of a complex composed of complement component C3, CLCA1/CLCA3, A2ML1/OH and ALB/serum albumin.

It localises to the secreted. Its function is as follows. Inhibits protease gelatinolytic complex activity against type 1 collagen. This is Alpha-2-macroglobulin-like protein 1 from Mus musculus (Mouse).